A 493-amino-acid chain; its full sequence is Dynein regulatory complex subunit 2 (493 aa).

2 coiled-coil regions span residues 99–163 (DSVI…RKLI) and 253–280 (KDEK…ILKG).

The protein belongs to the DRC2 family. In terms of assembly, component of the nexin-dynein regulatory complex (N-DRC). Interacts with DRC1.

Its subcellular location is the cytoplasm. The protein resides in the cytoskeleton. It localises to the flagellum basal body. The protein localises to the cell projection. It is found in the cilium. Its subcellular location is the flagellum. The protein resides in the flagellum axoneme. In terms of biological role, component of the nexin-dynein regulatory complex (N-DRC), a key regulator of ciliary/flagellar motility which maintains the alignment and integrity of the distal axoneme and regulates microtubule sliding in motile axonemes. Plays a critical role in the assembly of N-DRC and also stabilizes the assembly of multiple inner dynein arms and radial spokes. Coassembles with DRC1 to form a central scaffold needed for assembly of the N-DRC and its attachment to the outer doublet microtubules. The sequence is that of Dynein regulatory complex subunit 2 (Ccdc65) from Mus musculus (Mouse).